A 356-amino-acid polypeptide reads, in one-letter code: Methionine import ATP-binding protein MetN 1 (356 aa).

In terms of domain architecture, ABC transporter spans 15 to 254 (IQIRALNKTY…PVQPITQELL (240 aa)). 51–58 (GKSGAGKS) provides a ligand contact to ATP.

Belongs to the ABC transporter superfamily. Methionine importer (TC 3.A.1.24) family. The complex is composed of two ATP-binding proteins (MetN), two transmembrane proteins (MetI) and a solute-binding protein (MetQ).

It localises to the cell inner membrane. It catalyses the reaction L-methionine(out) + ATP + H2O = L-methionine(in) + ADP + phosphate + H(+). It carries out the reaction D-methionine(out) + ATP + H2O = D-methionine(in) + ADP + phosphate + H(+). In terms of biological role, part of the ABC transporter complex MetNIQ involved in methionine import. Responsible for energy coupling to the transport system. This chain is Methionine import ATP-binding protein MetN 1, found in Acinetobacter baylyi (strain ATCC 33305 / BD413 / ADP1).